The sequence spans 443 residues: Probable glycine dehydrogenase (decarboxylating) subunit 1 (443 aa).

Belongs to the GcvP family. N-terminal subunit subfamily. As to quaternary structure, the glycine cleavage system is composed of four proteins: P, T, L and H. In this organism, the P 'protein' is a heterodimer of two subunits.

It carries out the reaction N(6)-[(R)-lipoyl]-L-lysyl-[glycine-cleavage complex H protein] + glycine + H(+) = N(6)-[(R)-S(8)-aminomethyldihydrolipoyl]-L-lysyl-[glycine-cleavage complex H protein] + CO2. Its function is as follows. The glycine cleavage system catalyzes the degradation of glycine. The P protein binds the alpha-amino group of glycine through its pyridoxal phosphate cofactor; CO(2) is released and the remaining methylamine moiety is then transferred to the lipoamide cofactor of the H protein. This Nitratidesulfovibrio vulgaris (strain ATCC 29579 / DSM 644 / CCUG 34227 / NCIMB 8303 / VKM B-1760 / Hildenborough) (Desulfovibrio vulgaris) protein is Probable glycine dehydrogenase (decarboxylating) subunit 1.